The primary structure comprises 379 residues: ATP phosphoribosyltransferase regulatory subunit (379 aa).

Belongs to the class-II aminoacyl-tRNA synthetase family. HisZ subfamily. In terms of assembly, heteromultimer composed of HisG and HisZ subunits.

Its subcellular location is the cytoplasm. The protein operates within amino-acid biosynthesis; L-histidine biosynthesis; L-histidine from 5-phospho-alpha-D-ribose 1-diphosphate: step 1/9. In terms of biological role, required for the first step of histidine biosynthesis. May allow the feedback regulation of ATP phosphoribosyltransferase activity by histidine. In Gluconobacter oxydans (strain 621H) (Gluconobacter suboxydans), this protein is ATP phosphoribosyltransferase regulatory subunit.